Reading from the N-terminus, the 141-residue chain is Small ribosomal subunit protein eS17z (141 aa).

This sequence belongs to the eukaryotic ribosomal protein eS17 family.

The protein is Small ribosomal subunit protein eS17z (RPS17A) of Arabidopsis thaliana (Mouse-ear cress).